Consider the following 162-residue polypeptide: uncharacterized protein (162 aa).

A signal peptide spans 1–34 (MAREVISTSILMIATVVAVTAAIMVILPAVKDLA).

This is an uncharacterized protein from Archaeoglobus fulgidus (strain ATCC 49558 / DSM 4304 / JCM 9628 / NBRC 100126 / VC-16).